The primary structure comprises 459 residues: MSPQTETKASAGFKAGVKDYKLTYYTPDYETKDTDILAAFRVTPQPGVPPEEAGAAVAAESSTGTWTTVWTDGLTSLDRYKGRCYHIESVVGEEDQFIAYVAYPLDLFEEGSVTNMFTSIVGNVFGFKALRALRLEDLRIPPAYSKTFQGPPHGIQVERDKLNKYGRPLLGCTIKPKLGLSAKNYGRAVYECLRGGLDFTKDDENVNSQPFMRWRDRFLFCAEAIYKAQAETGEIKGHYLNATAGTCEEMIKRAVFARELGVPIVMHDYLAGGFTANTSLAFYCRDNGLLLHIHRAMHAVIDRQKNHGMHFRVLAKALRMSGGDHIHAGTVVGKLEGEREMTLGFVDLLRDDFIEKDRSRGIFFTQDWVSMPGVLPVASGGIHVWHMPALTEIFGDDSVLQFGGGTLGHPWGNAPGAVANRVALEACVQARNEGRDLAREGNEIIREACKWSPELAAAC.

A propeptide spanning residues 1–2 is cleaved from the precursor; the sequence is MS. Residue Pro-3 is modified to N-acetylproline. Lys-14 is subject to N6,N6,N6-trimethyllysine. Positions 123 and 173 each coordinate substrate. The active-site Proton acceptor is Lys-175. Residue Lys-177 coordinates substrate. Mg(2+) contacts are provided by Lys-201, Asp-203, and Glu-204. Position 201 is an N6-carboxylysine (Lys-201). The active-site Proton acceptor is His-294. Arg-295, His-327, and Ser-379 together coordinate substrate.

The protein belongs to the RuBisCO large chain family. Type I subfamily. As to quaternary structure, heterohexadecamer of 8 large chains and 8 small chains; disulfide-linked. The disulfide link is formed within the large subunit homodimers. Requires Mg(2+) as cofactor. Post-translationally, the disulfide bond which can form in the large chain dimeric partners within the hexadecamer appears to be associated with oxidative stress and protein turnover.

It is found in the plastid. The protein localises to the chloroplast. The enzyme catalyses 2 (2R)-3-phosphoglycerate + 2 H(+) = D-ribulose 1,5-bisphosphate + CO2 + H2O. It carries out the reaction D-ribulose 1,5-bisphosphate + O2 = 2-phosphoglycolate + (2R)-3-phosphoglycerate + 2 H(+). In terms of biological role, ruBisCO catalyzes two reactions: the carboxylation of D-ribulose 1,5-bisphosphate, the primary event in carbon dioxide fixation, as well as the oxidative fragmentation of the pentose substrate in the photorespiration process. Both reactions occur simultaneously and in competition at the same active site. The protein is Ribulose bisphosphate carboxylase large chain of Streptopus lanceolatus (Rose twisted stalk).